Reading from the N-terminus, the 74-residue chain is Ubiquitin-like protein FUBI (74 aa).

The protein belongs to the ubiquitin family.

The polypeptide is Ubiquitin-like protein FUBI (Fau) (Rattus norvegicus (Rat)).